A 461-amino-acid chain; its full sequence is Smoothelin-like protein 2 (461 aa).

A coiled-coil region spans residues 55–88; the sequence is PLARTVADLQRDNQRLQAQLERLTRQVEALGLAS. 2 disordered regions span residues 87–193 and 227–248; these read ASGM…LRLP and LNPS…KNSS. Over residues 94–107 the composition is skewed to pro residues; that stretch reads PGTPGTPSPPPAPG. Phosphothreonine is present on threonine 96. Serine 101, serine 129, and serine 134 each carry phosphoserine. Basic and acidic residues predominate over residues 134-147; it reads SLDHDEASESEMRK. Serine 256 and serine 269 each carry phosphoserine. The tract at residues 260-307 is disordered; it reads AVTASKHSNSPPLVTPPQSPVSPQPPAITQVHRQGERRRELVRSQTLP. The segment covering 272 to 285 has biased composition (pro residues); that stretch reads LVTPPQSPVSPQPP. The residue at position 274 (threonine 274) is a Phosphothreonine. Serine 278 carries the phosphoserine modification. Residues 292-301 show a composition bias toward basic and acidic residues; that stretch reads RQGERRRELV. Phosphoserine is present on serine 344. Positions 351-458 constitute a Calponin-homology (CH) domain; that stretch reads SSIKQILLEW…YVQSLYNHLR (108 aa).

The protein belongs to the smoothelin family.

The sequence is that of Smoothelin-like protein 2 (SMTNL2) from Homo sapiens (Human).